Reading from the N-terminus, the 107-residue chain is Cysteine proteinase inhibitor (107 aa).

A Cystatin domain is found at Gly18–Ala107. Positions Gln63–Gly67 match the Secondary area of contact motif.

The protein belongs to the cystatin family. Phytocystatin subfamily. In terms of tissue distribution, expressed in embryos, developing endosperms, leaves, roots, flowers and pollen grains.

In terms of biological role, inhibits papain, ficin, cathepsin B and, to a lesser extent, chymopapain, but is inactive against bromelain. Inhibits the growth of pathogenic fungi. Regulated by the DOF transcription factors SAD (activator) and BPBF (repressor). The chain is Cysteine proteinase inhibitor (ICY) from Hordeum vulgare (Barley).